Consider the following 28-residue polypeptide: Fibrinogen alpha chain (28 aa).

Serine 3 carries the phosphoserine modification.

As to quaternary structure, heterohexamer; disulfide linked. Contains 2 sets of 3 non-identical chains (alpha, beta and gamma). The 2 heterotrimers are in head to head conformation with the N-termini in a small central domain. Post-translationally, conversion of fibrinogen to fibrin is triggered by thrombin, which cleaves fibrinopeptides A and B from alpha and beta chains, and thus exposes the N-terminal polymerization sites responsible for the formation of the soft clot. The soft clot is converted into the hard clot by factor XIIIA which catalyzes the epsilon-(gamma-glutamyl)lysine cross-linking between gamma chains (stronger) and between alpha chains (weaker) of different monomers. In terms of processing, forms F13A-mediated cross-links between a glutamine and the epsilon-amino group of a lysine residue, forming fibronectin-fibrinogen heteropolymers.

Its subcellular location is the secreted. Functionally, cleaved by the protease thrombin to yield monomers which, together with fibrinogen beta (FGB) and fibrinogen gamma (FGG), polymerize to form an insoluble fibrin matrix. Fibrin has a major function in hemostasis as one of the primary components of blood clots. In addition, functions during the early stages of wound repair to stabilize the lesion and guide cell migration during re-epithelialization. Was originally thought to be essential for platelet aggregation, based on in vitro studies using anticoagulated blood. However, subsequent studies have shown that it is not absolutely required for thrombus formation in vivo. Enhances expression of SELP in activated platelets via an ITGB3-dependent pathway. Maternal fibrinogen is essential for successful pregnancy. Fibrin deposition is also associated with infection, where it protects against IFNG-mediated hemorrhage. May also facilitate the immune response via both innate and T-cell mediated pathways. The protein is Fibrinogen alpha chain (FGA) of Canis lupus familiaris (Dog).